The chain runs to 141 residues: Hemoglobin subunit alpha (141 aa).

Residues 1–141 (VLSPADKKNV…VSTVLTSKYR (141 aa)) form the Globin domain. A Phosphoserine modification is found at serine 3. N6-succinyllysine occurs at positions 7 and 11. Position 16 is an N6-acetyllysine; alternate (lysine 16). Residue lysine 16 is modified to N6-succinyllysine; alternate. Position 24 is a phosphotyrosine (tyrosine 24). The residue at position 35 (serine 35) is a Phosphoserine. N6-succinyllysine is present on lysine 40. Serine 49 is subject to Phosphoserine. Histidine 58 lines the O2 pocket. Residue histidine 87 coordinates heme b. The residue at position 102 (serine 102) is a Phosphoserine. Threonine 108 is modified (phosphothreonine). A phosphoserine mark is found at serine 124 and serine 131. 2 positions are modified to phosphothreonine: threonine 134 and threonine 137. Phosphoserine is present on serine 138.

It belongs to the globin family. Heterotetramer of two alpha chains and two beta chains. In terms of tissue distribution, red blood cells.

Involved in oxygen transport from the lung to the various peripheral tissues. Functionally, hemopressin acts as an antagonist peptide of the cannabinoid receptor CNR1. Hemopressin-binding efficiently blocks cannabinoid receptor CNR1 and subsequent signaling. In Spermophilus citellus (European ground squirrel), this protein is Hemoglobin subunit alpha (HBA).